A 430-amino-acid chain; its full sequence is MTNVVVVGAQWGDEGKGKIVDWLSEQADIVVRFQGGHNAGHTLVIDGNTYKLALLPSGVVRSSKLSVIGNGVVFDPQAFVNEVEKLKEQGVKVGPDNLRVAENVTLILPLHRELDSLRENASAATAIGTTQRGIGPAYEDKVGRRAIRLMDLADPQTLPHKIERLLAHHNALRRGHGIAEVDSGALLRDLAAIAPRVLPYADSVWNLLDHKRREGKRILFEGAQGALLDVDHGTYPYVTSSNTVAAQAATGTGMGPSALGYVLGICKAYTTRVGQGPFPTELNDEIGELIGQRGKEFGVNTGRKRRCGWFDAMLVRQTVRTSGIHGLALTKLDILDGFDTIQVCTGYRLDGKEIDHLPAGEGAQARIEPVYETVEGWKEPTANARSWADLPAQAIKYVRRIEELVGCPVALLSTSPEREDTILVQNPFEA.

GTP-binding positions include 12–18 and 40–42; these read GDEGKGK and GHT. Asp-13 acts as the Proton acceptor in catalysis. 2 residues coordinate Mg(2+): Asp-13 and Gly-40. Residues 13-16, 38-41, Thr-130, Arg-144, Gln-224, Thr-239, and Arg-303 contribute to the IMP site; these read DEGK and NAGH. The Proton donor role is filled by His-41. 299-305 provides a ligand contact to substrate; it reads VNTGRKR. GTP-binding positions include Arg-305, 331-333, and 413-415; these read KLD and STS.

This sequence belongs to the adenylosuccinate synthetase family. In terms of assembly, homodimer. The cofactor is Mg(2+).

It localises to the cytoplasm. The catalysed reaction is IMP + L-aspartate + GTP = N(6)-(1,2-dicarboxyethyl)-AMP + GDP + phosphate + 2 H(+). The protein operates within purine metabolism; AMP biosynthesis via de novo pathway; AMP from IMP: step 1/2. Its function is as follows. Plays an important role in the de novo pathway of purine nucleotide biosynthesis. Catalyzes the first committed step in the biosynthesis of AMP from IMP. This chain is Adenylosuccinate synthetase, found in Nitrobacter winogradskyi (strain ATCC 25391 / DSM 10237 / CIP 104748 / NCIMB 11846 / Nb-255).